Here is a 298-residue protein sequence, read N- to C-terminus: Ribosomal protein L11 methyltransferase (298 aa).

S-adenosyl-L-methionine contacts are provided by Thr150, Gly171, Asp193, and Asn232.

The protein belongs to the methyltransferase superfamily. PrmA family.

It is found in the cytoplasm. The enzyme catalyses L-lysyl-[protein] + 3 S-adenosyl-L-methionine = N(6),N(6),N(6)-trimethyl-L-lysyl-[protein] + 3 S-adenosyl-L-homocysteine + 3 H(+). In terms of biological role, methylates ribosomal protein L11. In Chromobacterium violaceum (strain ATCC 12472 / DSM 30191 / JCM 1249 / CCUG 213 / NBRC 12614 / NCIMB 9131 / NCTC 9757 / MK), this protein is Ribosomal protein L11 methyltransferase.